Here is a 364-residue protein sequence, read N- to C-terminus: BTB/POZ and TAZ domain-containing protein 2 (364 aa).

The region spanning 34-106 (SDVEIVTSDN…LYSSSLTEDE (73 aa)) is the BTB domain. The Nuclear localization signal signature appears at 203 to 212 (RKKRRRRHRK). The TAZ-type zinc-finger motif lies at 215 to 316 (DLYMQLSEAM…PDSCRVPLCR (102 aa)). The caM-binding stretch occupies residues 327–350 (KMGEDTKWKLLVTRVVSAKAMTSL).

As to quaternary structure, interacts with CUL3A. Interacts with GTE11/BET10 through the BTB domain. Preferentially expressed in young leaves and roots.

It is found in the nucleus. The protein resides in the cytoplasm. It functions in the pathway protein modification; protein ubiquitination. Its function is as follows. May act as a substrate-specific adapter of an E3 ubiquitin-protein ligase complex (CUL3-RBX1-BTB) which mediates the ubiquitination and subsequent proteasomal degradation of target proteins. Plays a key role as a component of the TAC1-mediated telomerase activation pathway certainly by targeting a telomerase repressor to degradation. Seems to occupy an integral position in a complex signaling network that perceives, integrates, and responds to multiple, and sometimes competing, signals. Enhances responses to auxin in postgermination and vegetative development. Also negatively regulates ABA- and sugar-mediated inhibition of the germination. Essential for female and male gametophyte development. This chain is BTB/POZ and TAZ domain-containing protein 2 (BT2), found in Arabidopsis thaliana (Mouse-ear cress).